The sequence spans 327 residues: GMP reductase (327 aa).

Cys-176 serves as the catalytic Thioimidate intermediate. Ile-205 to Val-228 is a binding site for NADP(+).

It belongs to the IMPDH/GMPR family. GuaC type 2 subfamily.

The catalysed reaction is IMP + NH4(+) + NADP(+) = GMP + NADPH + 2 H(+). Functionally, catalyzes the irreversible NADPH-dependent deamination of GMP to IMP. It functions in the conversion of nucleobase, nucleoside and nucleotide derivatives of G to A nucleotides, and in maintaining the intracellular balance of A and G nucleotides. In Streptococcus gordonii (strain Challis / ATCC 35105 / BCRC 15272 / CH1 / DL1 / V288), this protein is GMP reductase.